Here is a 222-residue protein sequence, read N- to C-terminus: Phosphoribosylformylglycinamidine synthase subunit PurQ (222 aa).

The Glutamine amidotransferase type-1 domain occupies 3 to 222 (AAVVVFPGSN…RALAGALTPA (220 aa)). C86 functions as the Nucleophile in the catalytic mechanism. Active-site residues include H194 and E196.

Part of the FGAM synthase complex composed of 1 PurL, 1 PurQ and 2 PurS subunits.

Its subcellular location is the cytoplasm. It catalyses the reaction N(2)-formyl-N(1)-(5-phospho-beta-D-ribosyl)glycinamide + L-glutamine + ATP + H2O = 2-formamido-N(1)-(5-O-phospho-beta-D-ribosyl)acetamidine + L-glutamate + ADP + phosphate + H(+). The enzyme catalyses L-glutamine + H2O = L-glutamate + NH4(+). The protein operates within purine metabolism; IMP biosynthesis via de novo pathway; 5-amino-1-(5-phospho-D-ribosyl)imidazole from N(2)-formyl-N(1)-(5-phospho-D-ribosyl)glycinamide: step 1/2. Part of the phosphoribosylformylglycinamidine synthase complex involved in the purines biosynthetic pathway. Catalyzes the ATP-dependent conversion of formylglycinamide ribonucleotide (FGAR) and glutamine to yield formylglycinamidine ribonucleotide (FGAM) and glutamate. The FGAM synthase complex is composed of three subunits. PurQ produces an ammonia molecule by converting glutamine to glutamate. PurL transfers the ammonia molecule to FGAR to form FGAM in an ATP-dependent manner. PurS interacts with PurQ and PurL and is thought to assist in the transfer of the ammonia molecule from PurQ to PurL. This is Phosphoribosylformylglycinamidine synthase subunit PurQ from Ruegeria pomeroyi (strain ATCC 700808 / DSM 15171 / DSS-3) (Silicibacter pomeroyi).